Consider the following 275-residue polypeptide: Ditrans,polycis-undecaprenyl-diphosphate synthase ((2E,6E)-farnesyl-diphosphate specific) (275 aa).

The active site involves Asp-45. Residue Asp-45 participates in Mg(2+) binding. Substrate-binding positions include 46–49 (GNGR), Trp-50, Arg-58, His-62, and 90–92 (SSE). The active-site Proton acceptor is Asn-93. Residues Trp-94, Arg-96, Arg-213, and 219-221 (RIS) each bind substrate. Glu-232 provides a ligand contact to Mg(2+).

This sequence belongs to the UPP synthase family. In terms of assembly, homodimer. Mg(2+) is required as a cofactor.

The catalysed reaction is 8 isopentenyl diphosphate + (2E,6E)-farnesyl diphosphate = di-trans,octa-cis-undecaprenyl diphosphate + 8 diphosphate. Functionally, catalyzes the sequential condensation of isopentenyl diphosphate (IPP) with (2E,6E)-farnesyl diphosphate (E,E-FPP) to yield (2Z,6Z,10Z,14Z,18Z,22Z,26Z,30Z,34E,38E)-undecaprenyl diphosphate (di-trans,octa-cis-UPP). UPP is the precursor of glycosyl carrier lipid in the biosynthesis of bacterial cell wall polysaccharide components such as peptidoglycan and lipopolysaccharide. The chain is Ditrans,polycis-undecaprenyl-diphosphate synthase ((2E,6E)-farnesyl-diphosphate specific) from Shewanella oneidensis (strain ATCC 700550 / JCM 31522 / CIP 106686 / LMG 19005 / NCIMB 14063 / MR-1).